The sequence spans 177 residues: Macro domain-containing protein in non 5'region (177 aa).

Positions 1 to 177 constitute a Macro domain; that stretch reads MSTSVSPVVR…VEFEEVLAMR (177 aa).

Belongs to the MacroD-type family.

The sequence is that of Macro domain-containing protein in non 5'region from Streptomyces griseus.